The chain runs to 445 residues: RNA pseudouridine synthase 2, chloroplastic (445 aa).

The transit peptide at 1 to 44 directs the protein to the chloroplast; the sequence is MATTAAASPPAIATALSALLRRQRRRSSRCVGASHARCLAADAN. Residues 47–66 are disordered; it reads AVAPSRRGGHGGTRLEEAVP. The 76-residue stretch at 72–147 folds into the S4 RNA-binding domain; sequence SRIDAWISAR…IPLDIVYEDD (76 aa). Residue D235 is part of the active site.

This sequence belongs to the pseudouridine synthase RluA family.

The protein localises to the plastid. It localises to the chloroplast. The catalysed reaction is a uridine in RNA = a pseudouridine in RNA. The protein is RNA pseudouridine synthase 2, chloroplastic of Oryza sativa subsp. japonica (Rice).